Reading from the N-terminus, the 70-residue chain is ATP synthase subunit c (70 aa).

Transmembrane regions (helical) follow at residues 4-24 (IAAAIAIGLGALGAGIGNGLI) and 49-69 (GIALVEALPIIAVVIAFLAFF).

The protein belongs to the ATPase C chain family. F-type ATPases have 2 components, F(1) - the catalytic core - and F(0) - the membrane proton channel. F(1) has five subunits: alpha(3), beta(3), gamma(1), delta(1), epsilon(1). F(0) has three main subunits: a(1), b(2) and c(10-14). The alpha and beta chains form an alternating ring which encloses part of the gamma chain. F(1) is attached to F(0) by a central stalk formed by the gamma and epsilon chains, while a peripheral stalk is formed by the delta and b chains. The F(1)F(0) complex interacts with SpoIIIJ and YqjG; YqgA is found in the same complex.

It localises to the cell membrane. Functionally, f(1)F(0) ATP synthase produces ATP from ADP in the presence of a proton or sodium gradient. F-type ATPases consist of two structural domains, F(1) containing the extramembraneous catalytic core and F(0) containing the membrane proton channel, linked together by a central stalk and a peripheral stalk. During catalysis, ATP synthesis in the catalytic domain of F(1) is coupled via a rotary mechanism of the central stalk subunits to proton translocation. Its function is as follows. Key component of the F(0) channel; it plays a direct role in translocation across the membrane. A homomeric c-ring of between 10-14 subunits forms the central stalk rotor element with the F(1) delta and epsilon subunits. This chain is ATP synthase subunit c, found in Bacillus subtilis (strain 168).